A 91-amino-acid chain; its full sequence is Acyl-CoA-binding domain-containing protein 1 (91 aa).

The region spanning Leu-3 to Ala-88 is the ACB domain. Residues Lys-15, Tyr-30–Lys-34, Lys-56, and Tyr-75 contribute to the an acyl-CoA site.

It belongs to the ACBP family. In terms of tissue distribution, highly expressed in leaves. Expressed at low levels in roots and seeds.

Its subcellular location is the cytoplasm. The protein resides in the cytosol. In terms of biological role, binds medium- and long-chain acyl-CoA esters with high affinity. Can interact in vitro with palmitoyl-CoA, oleoyl-CoA, linoleoyl-CoA and linolenoyl-CoA. Binds phosphatidic acid (PA) and phosphatidylcholine (PC) in vitro. May play a role in the biosynthesis of phospholipids. The sequence is that of Acyl-CoA-binding domain-containing protein 1 from Oryza sativa subsp. japonica (Rice).